Consider the following 111-residue polypeptide: Large ribosomal subunit protein uL24 (111 aa).

It belongs to the universal ribosomal protein uL24 family. In terms of assembly, part of the 50S ribosomal subunit.

One of two assembly initiator proteins, it binds directly to the 5'-end of the 23S rRNA, where it nucleates assembly of the 50S subunit. In terms of biological role, one of the proteins that surrounds the polypeptide exit tunnel on the outside of the subunit. The polypeptide is Large ribosomal subunit protein uL24 (Bifidobacterium longum (strain DJO10A)).